The following is a 401-amino-acid chain: Subtilisin-like protease 7 (401 aa).

Positions 1–20 are cleaved as a signal peptide; it reads MGFITKAIPLALAAASVING. Positions 21–119 are excised as a propeptide; it reads AEILETRAGV…IERDARVQIN (99 aa). The 83-residue stretch at 36–118 folds into the Inhibitor I9 domain; it reads KYIVVMNDGM…YIERDARVQI (83 aa). The N-linked (GlcNAc...) asparagine glycan is linked to N58. Residues 129-401 form the Peptidase S8 domain; that stretch reads SWGLARVGSR…SKLINNGSGM (273 aa). Catalysis depends on charge relay system residues D161 and H193. N223 and N253 each carry an N-linked (GlcNAc...) asparagine glycan. S347 acts as the Charge relay system in catalysis. A glycan (N-linked (GlcNAc...) asparagine) is linked at N397.

It belongs to the peptidase S8 family.

It localises to the secreted. Functionally, secreted subtilisin-like serine protease with keratinolytic activity that contributes to pathogenicity. The protein is Subtilisin-like protease 7 (SUB7) of Trichophyton equinum (Horse ringworm fungus).